Consider the following 95-residue polypeptide: MGRSRKKGPYVDRKLLEKIRKLNETGEKKVIKTWSRASMIIPEMVGHTIAVYNGMKHIPVYITENMIGHRLGEFAPTRRFGGHADKKAKKGELKK.

Residues 76–95 (PTRRFGGHADKKAKKGELKK) form a disordered region. Over residues 82–95 (GHADKKAKKGELKK) the composition is skewed to basic and acidic residues.

Belongs to the universal ribosomal protein uS19 family.

Functionally, protein S19 forms a complex with S13 that binds strongly to the 16S ribosomal RNA. The polypeptide is Small ribosomal subunit protein uS19 (rpsS) (Thermotoga maritima (strain ATCC 43589 / DSM 3109 / JCM 10099 / NBRC 100826 / MSB8)).